Reading from the N-terminus, the 635-residue chain is Threonine--tRNA ligase (635 aa).

The TGS domain occupies 1–61 (MIQITLPDAS…EKDSALSIIT (61 aa)). The interval 242–533 (DHRKLGKELD…LIEEHAGALP (292 aa)) is catalytic. Zn(2+) contacts are provided by cysteine 333, histidine 384, and histidine 510.

This sequence belongs to the class-II aminoacyl-tRNA synthetase family. As to quaternary structure, homodimer. Requires Zn(2+) as cofactor.

It is found in the cytoplasm. It carries out the reaction tRNA(Thr) + L-threonine + ATP = L-threonyl-tRNA(Thr) + AMP + diphosphate + H(+). Catalyzes the attachment of threonine to tRNA(Thr) in a two-step reaction: L-threonine is first activated by ATP to form Thr-AMP and then transferred to the acceptor end of tRNA(Thr). Also edits incorrectly charged L-seryl-tRNA(Thr). The chain is Threonine--tRNA ligase from Polaromonas sp. (strain JS666 / ATCC BAA-500).